We begin with the raw amino-acid sequence, 103 residues long: Putative membrane protein insertion efficiency factor (103 aa).

The protein belongs to the UPF0161 family.

It localises to the cell inner membrane. Could be involved in insertion of integral membrane proteins into the membrane. This chain is Putative membrane protein insertion efficiency factor, found in Chlamydia pneumoniae (Chlamydophila pneumoniae).